The chain runs to 495 residues: Probable leucine aminopeptidase 2 (495 aa).

A signal peptide spans 1–21; that stretch reads MKSQLLSLAVAVTTISQGVVG. Residues 130 to 216 enclose the PA domain; it reads MAELVVAKNN…SQEDGKNLAT (87 aa). 2 N-linked (GlcNAc...) asparagine glycosylation sites follow: N142 and N235. The Zn(2+) site is built by H259 and D271. Residue N272 is glycosylated (N-linked (GlcNAc...) asparagine). The Proton acceptor role is filled by E303. Zn(2+)-binding residues include E304 and D332. N-linked (GlcNAc...) asparagine glycosylation occurs at N352. Position 430 (H430) interacts with Zn(2+).

The protein belongs to the peptidase M28 family. M28A subfamily. In terms of assembly, monomer. Requires Zn(2+) as cofactor.

It localises to the secreted. Its function is as follows. Extracellular aminopeptidase that releases a wide variety of amino acids from natural peptides and contributes to pathogenicity. This is Probable leucine aminopeptidase 2 (LAP2) from Trichophyton verrucosum (strain HKI 0517).